We begin with the raw amino-acid sequence, 894 residues long: Phosphinomethylmalate isomerase (894 aa).

The [4Fe-4S] cluster site is built by Cys-438, Cys-504, and Cys-507.

This sequence belongs to the aconitase/IPM isomerase family. [4Fe-4S] cluster is required as a cofactor.

It carries out the reaction phosphinomethylmalate = phosphinomethylisomalate. The catalysed reaction is phosphinomethylmalate = 2-(phosphinatomethylidene)butanedioate + H2O. The enzyme catalyses 2-(phosphinatomethylidene)butanedioate + H2O = phosphinomethylisomalate. It participates in secondary metabolite biosynthesis; bialaphos biosynthesis. Its function is as follows. Isomerase involved in the biosynthesis of phosphinothricin tripeptide (PTT), also known as bialaphos (BA), a natural-product antibiotic and potent herbicide. Probably catalyzes the isomerization of phosphinomethylmalate to phosphinomethylisomalate. Shows no standard aconitase activity with citrate as a substrate and is not able to complement an acnA mutant. In Streptomyces viridochromogenes (strain DSM 40736 / JCM 4977 / BCRC 1201 / Tue 494), this protein is Phosphinomethylmalate isomerase.